The chain runs to 400 residues: tRNA-specific 2-thiouridylase MnmA (400 aa).

ATP is bound by residues 19 to 26 (AMSGGVDS) and leucine 45. Cysteine 113 functions as the Nucleophile in the catalytic mechanism. The cysteines at positions 113 and 210 are disulfide-linked. Glycine 137 serves as a coordination point for ATP. An interaction with tRNA region spans residues 160–162 (RDQ). Cysteine 210 acts as the Cysteine persulfide intermediate in catalysis.

This sequence belongs to the MnmA/TRMU family.

It localises to the cytoplasm. It carries out the reaction S-sulfanyl-L-cysteinyl-[protein] + uridine(34) in tRNA + AH2 + ATP = 2-thiouridine(34) in tRNA + L-cysteinyl-[protein] + A + AMP + diphosphate + H(+). Its function is as follows. Catalyzes the 2-thiolation of uridine at the wobble position (U34) of tRNA, leading to the formation of s(2)U34. The polypeptide is tRNA-specific 2-thiouridylase MnmA (Rhodopseudomonas palustris (strain BisA53)).